The sequence spans 280 residues: Dermonecrotic toxin LgSicTox-alphaIC1 (280 aa).

H12 is a catalytic residue. Mg(2+)-binding residues include E32 and D34. H48 functions as the Nucleophile in the catalytic mechanism. Cystine bridges form between C52–C58 and C54–C197. D92 is a binding site for Mg(2+).

It belongs to the arthropod phospholipase D family. Class II subfamily. The cofactor is Mg(2+). Expressed by the venom gland.

The protein localises to the secreted. It carries out the reaction an N-(acyl)-sphingosylphosphocholine = an N-(acyl)-sphingosyl-1,3-cyclic phosphate + choline. The catalysed reaction is an N-(acyl)-sphingosylphosphoethanolamine = an N-(acyl)-sphingosyl-1,3-cyclic phosphate + ethanolamine. It catalyses the reaction a 1-acyl-sn-glycero-3-phosphocholine = a 1-acyl-sn-glycero-2,3-cyclic phosphate + choline. The enzyme catalyses a 1-acyl-sn-glycero-3-phosphoethanolamine = a 1-acyl-sn-glycero-2,3-cyclic phosphate + ethanolamine. Functionally, dermonecrotic toxins cleave the phosphodiester linkage between the phosphate and headgroup of certain phospholipids (sphingolipid and lysolipid substrates), forming an alcohol (often choline) and a cyclic phosphate. This toxin acts on sphingomyelin (SM) with high activity. It may also act on ceramide phosphoethanolamine (CPE), lysophosphatidylcholine (LPC) and lysophosphatidylethanolamine (LPE), but not on lysophosphatidylserine (LPS), and lysophosphatidylglycerol (LPG). It acts by transphosphatidylation, releasing exclusively cyclic phosphate products as second products. Induces platelet aggregation in platelet rich plasma, but not in washed platelet, indicating that this activity is dependent on plasma components. Also induces hemolysis. In vivo, the recombinant protein evokes an intense inflammatory reaction and dermonecrosis, similar to those induced by L.gaucho total venom. Is a good immunogen, capable of inducing immunoprotection in test animals. In terms of biological role, anionic antimicrobial peptide that shows antimicrobial activity against Gram-negative bacteria (MIC=1.15-4.6 uM) (tested on E.coli, P.aeruginosa, and E.cloacae), but not on Gram-negative bacteria (M.luteus, S.aureus, and B.subtilis), neither on fungi and yeasts (A.niger, C.albicans and C.krusei). Does not show hemolytic effects against human erythrocytes, and has no cytotoxic effects against human cervical carcinoma cells (HeLa). This chain is Dermonecrotic toxin LgSicTox-alphaIC1, found in Loxosceles gaucho (Spider).